We begin with the raw amino-acid sequence, 85 residues long: MKSEKSADAYGTYFLLISTIFLLFIARQASSYQMLICLDLNISCADCQKQCDETSYGGMCLNGGRTCCCKKSPPPSYYDPRPPSS.

A signal peptide spans 1–31; it reads MKSEKSADAYGTYFLLISTIFLLFIARQASS. 4 cysteine pairs are disulfide-bonded: C37–C69, C44–C60, C47–C67, and C51–C68.

Belongs to the DEFL family.

It localises to the secreted. The sequence is that of Putative defensin-like protein 79 from Arabidopsis thaliana (Mouse-ear cress).